The sequence spans 401 residues: MSESAFAERIVHNLLDTDFYKLTMMQGVLHNYPDADVEWEFRCRNGEDLRPYLGEIRNQLERLADLTLDDGQLAFLERISFLKPDFLRFLRLFRFNLRYVHVGIENDQLFLRLKGPWLHVILFEVPLLAIISEVRNRNLHPHMRLAEARDQLYRKFDWLRAHASDDELAELQVADFGTRRRFSSRVQEEVARVLRDDFPGRFVGTSNVDLAWKLDIKPLGTMAHEWIMAHQQLGPRLIDSQIAALDCWVREYRGLLGIALTDCITMDAFLGDFDLYFAKLFDGLRHDSGEPVAWAEKAIAHYQKLGIDPMTKTLVFSDGLNLTRSLEIFRALRGRINVSFGIGTNLTCDIPGVAPMNIVLKMTDCNGAPVAKISDEAAKTQCRDENFVAYMRHVFKVPSKE.

His-224 carries the phosphohistidine; by autocatalysis modification.

This sequence belongs to the NAPRTase family. In terms of processing, transiently phosphorylated on a His residue during the reaction cycle. Phosphorylation strongly increases the affinity for substrates and increases the rate of nicotinate D-ribonucleotide production. Dephosphorylation regenerates the low-affinity form of the enzyme, leading to product release.

It carries out the reaction nicotinate + 5-phospho-alpha-D-ribose 1-diphosphate + ATP + H2O = nicotinate beta-D-ribonucleotide + ADP + phosphate + diphosphate. It functions in the pathway cofactor biosynthesis; NAD(+) biosynthesis; nicotinate D-ribonucleotide from nicotinate: step 1/1. Catalyzes the synthesis of beta-nicotinate D-ribonucleotide from nicotinate and 5-phospho-D-ribose 1-phosphate at the expense of ATP. This is Nicotinate phosphoribosyltransferase from Pseudomonas putida (strain ATCC 47054 / DSM 6125 / CFBP 8728 / NCIMB 11950 / KT2440).